We begin with the raw amino-acid sequence, 142 residues long: Large ribosomal subunit protein uL13 (142 aa).

The protein belongs to the universal ribosomal protein uL13 family. As to quaternary structure, part of the 50S ribosomal subunit.

Its function is as follows. This protein is one of the early assembly proteins of the 50S ribosomal subunit, although it is not seen to bind rRNA by itself. It is important during the early stages of 50S assembly. The polypeptide is Large ribosomal subunit protein uL13 (Dechloromonas aromatica (strain RCB)).